A 363-amino-acid polypeptide reads, in one-letter code: G kinase-anchoring protein 1-B (363 aa).

Disordered stretches follow at residues 17–79 (ALLK…RNLA) and 147–182 (VNGDGVNGVPQSKKVNKKDKRKNNQGKDKPLTVPLK). The stretch at 50-79 (KTNVNEKKKEKRRKKKEQQQSEANELRNLA) forms a coiled coil. Residues 160 to 170 (KVNKKDKRKNN) are compositionally biased toward basic residues. Coiled-coil stretches lie at residues 249 to 298 (DGKT…QEGE) and 328 to 348 (AALEQERSKVKVLQAEQVRYQ).

It belongs to the GKAP1 family.

It is found in the golgi apparatus. Its function is as follows. May play a role in the regulation of insulin-dependent IRS1 tyrosine phosphorylation in adipocytes. The chain is G kinase-anchoring protein 1-B (gkap1-b) from Xenopus laevis (African clawed frog).